We begin with the raw amino-acid sequence, 184 residues long: uncharacterized protein (184 aa).

The segment at 146–177 (HPKTSLAQQPNAKATQPPLSKETLNTAKETDP) is disordered. A compositionally biased stretch (polar residues) spans 150-172 (SLAQQPNAKATQPPLSKETLNTA).

This is an uncharacterized protein from Picosynechococcus sp. (strain ATCC 27264 / PCC 7002 / PR-6) (Agmenellum quadruplicatum).